We begin with the raw amino-acid sequence, 301 residues long: MSTVAAARYGKDNVRVYKVHKDPKTGVQTVTEMTVCVLLEGEIDTSYTKADNSVIVATDSIKNTIFILAKQNPVTPPELFGSILGTHFINKYKHIHVAHTNIITHRWTRLNIDGKPHSHSFVRDSEETRNVQVDVTEGVGIDIKSSINKLTVLKSTGSQFWGFVRDEYTTLPEVWDRILSTDVEATWAWKRFSGLDEVRGNVPKFDETWEAARNITLKTFAEEESASVQATMYKMGEQILAYQPLLETVEYSLPNKHYFEIDLSWHKGLKNTGKDAEVFVPQTNPNGLIKCTVGRKSKAKL.

Residues Lys11 and Thr58 each act as charge relay system in the active site. Urate contacts are provided by Thr58, Asp59, Phe160, Arg177, Val228, Gln229, and Asn255. The active-site Charge relay system is His257. Residues 299-301 carry the Microbody targeting signal motif; sequence AKL.

Belongs to the uricase family.

It is found in the peroxisome. It catalyses the reaction urate + O2 + H2O = 5-hydroxyisourate + H2O2. The protein operates within purine metabolism; urate degradation; (S)-allantoin from urate: step 1/3. Catalyzes the oxidation of uric acid to 5-hydroxyisourate, which is further processed to form (S)-allantoin. This chain is Uricase (uaZ), found in Emericella nidulans (strain FGSC A4 / ATCC 38163 / CBS 112.46 / NRRL 194 / M139) (Aspergillus nidulans).